The sequence spans 276 residues: Urease accessory protein UreD (276 aa).

This sequence belongs to the UreD family. UreD, UreF and UreG form a complex that acts as a GTP-hydrolysis-dependent molecular chaperone, activating the urease apoprotein by helping to assemble the nickel containing metallocenter of UreC. The UreE protein probably delivers the nickel.

It localises to the cytoplasm. Required for maturation of urease via the functional incorporation of the urease nickel metallocenter. The polypeptide is Urease accessory protein UreD (Variovorax paradoxus (strain S110)).